Consider the following 149-residue polypeptide: Endoribonuclease YbeY (149 aa).

Zn(2+) is bound by residues histidine 113, histidine 117, and histidine 123.

This sequence belongs to the endoribonuclease YbeY family. Zn(2+) serves as cofactor.

It localises to the cytoplasm. In terms of biological role, single strand-specific metallo-endoribonuclease involved in late-stage 70S ribosome quality control and in maturation of the 3' terminus of the 16S rRNA. The protein is Endoribonuclease YbeY of Saccharophagus degradans (strain 2-40 / ATCC 43961 / DSM 17024).